Consider the following 354-residue polypeptide: Rhodopsin (354 aa).

At 1 to 36 (MNGTEGPMFYVPMSNATGVVKSPYDYPQYYLVAPWA) the chain is on the extracellular side. 2 N-linked (GlcNAc...) asparagine glycosylation sites follow: Asn-2 and Asn-15. Residues 37 to 61 (YGCLAAYMFFLIITGFPINFLTLYV) form a helical membrane-spanning segment. Topologically, residues 62 to 73 (TIEHKKLRTPLN) are cytoplasmic. The chain crosses the membrane as a helical span at residues 74–96 (YILLNLAISDLFMVFGGFTTTMY). The Extracellular segment spans residues 97 to 110 (TSLHGYFVFGRIGC). Residues Cys-110 and Cys-187 are joined by a disulfide bond. The helical transmembrane segment at 111–133 (NLEGFFATLGGEMGLWSLVVLAF) threads the bilayer. A 'Ionic lock' involved in activated form stabilization motif is present at residues 134–136 (ERW). The Cytoplasmic portion of the chain corresponds to 134 to 152 (ERWMVVCKPVSNFRFGENH). The chain crosses the membrane as a helical span at residues 153 to 173 (AIMGVVFTWFMACTCAVPPLV). The Extracellular segment spans residues 174 to 202 (GWSRYIPEGMQCSCGVDYYTRAPGYNNES). The chain crosses the membrane as a helical span at residues 203–224 (FVIYMFLVHFIIPLIVIFFCYG). At 225–252 (RLVCTVKDAAAQQQESETTQRAEREVTR) the chain is on the cytoplasmic side. The helical transmembrane segment at 253–274 (MVVIMVIGFLICWIPYASVAWY) threads the bilayer. Residues 275-286 (IFTHQGSEFGPV) lie on the Extracellular side of the membrane. Residues 287–308 (FMTVPAFFAKSAAVYNPCIYIC) form a helical membrane-spanning segment. Residue Lys-296 is modified to N6-(retinylidene)lysine. Residues 309–354 (MNKQFRHCMITTLCCGKNPFEEEEGASTTASKTEASSVSSSSVSPA) are Cytoplasmic-facing. S-palmitoyl cysteine attachment occurs at residues Cys-322 and Cys-323. The disordered stretch occupies residues 333 to 354 (GASTTASKTEASSVSSSSVSPA). Positions 334 to 354 (ASTTASKTEASSVSSSSVSPA) are enriched in low complexity.

The protein belongs to the G-protein coupled receptor 1 family. Opsin subfamily. Post-translationally, phosphorylated on some or all of the serine and threonine residues present in the C-terminal region. Contains one covalently linked retinal chromophore.

The protein resides in the membrane. Its subcellular location is the cell projection. It localises to the cilium. It is found in the photoreceptor outer segment. Photoreceptor required for image-forming vision at low light intensity. While most salt water fish species use retinal as chromophore, most freshwater fish use 3-dehydroretinal, or a mixture of retinal and 3-dehydroretinal. Light-induced isomerization of 11-cis to all-trans retinal triggers a conformational change that activates signaling via G-proteins. Subsequent receptor phosphorylation mediates displacement of the bound G-protein alpha subunit by arrestin and terminates signaling. This Cyprinus carpio (Common carp) protein is Rhodopsin (rho).